An 87-amino-acid polypeptide reads, in one-letter code: Defensin-A (87 aa).

A signal peptide spans Met-1–Ala-19. Positions Leu-20–Gln-44 are excised as a propeptide. Intrachain disulfides connect Cys-57–Cys-78, Cys-64–Cys-83, and Cys-68–Cys-85.

Hemolymph and fat body.

It is found in the secreted. Antibacterial peptide mostly active against Gram-positive and Gram negative bacteria. The protein is Defensin-A of Glossina morsitans morsitans (Savannah tsetse fly).